The primary structure comprises 217 residues: Transcription antitermination protein NusB (217 aa).

Belongs to the NusB family.

Involved in transcription antitermination. Required for transcription of ribosomal RNA (rRNA) genes. Binds specifically to the boxA antiterminator sequence of the ribosomal RNA (rrn) operons. This is Transcription antitermination protein NusB from Microcystis aeruginosa (strain NIES-843 / IAM M-2473).